The following is a 136-amino-acid chain: Large ribosomal subunit protein uL16c (136 aa).

It belongs to the universal ribosomal protein uL16 family. As to quaternary structure, part of the 50S ribosomal subunit.

It localises to the plastid. Its subcellular location is the chloroplast. The sequence is that of Large ribosomal subunit protein uL16c from Oryza sativa (Rice).